The chain runs to 411 residues: Adenylosuccinate synthetase (411 aa).

GTP contacts are provided by residues Gly11–Lys17 and Gly39–Thr41. Asp12 acts as the Proton acceptor in catalysis. Positions 12 and 39 each coordinate Mg(2+). Residues Asp12 to Lys15, Asn37 to His40, Thr121, Arg135, Gln215, Thr230, and Arg294 each bind IMP. The active-site Proton donor is His40. Substrate is bound at residue Thr290 to Arg296. Residues Arg296, Lys322 to Asp324, and Ser400 to Ser402 each bind GTP.

It belongs to the adenylosuccinate synthetase family. As to quaternary structure, homodimer. It depends on Mg(2+) as a cofactor.

The protein localises to the cytoplasm. The enzyme catalyses IMP + L-aspartate + GTP = N(6)-(1,2-dicarboxyethyl)-AMP + GDP + phosphate + 2 H(+). Its pathway is purine metabolism; AMP biosynthesis via de novo pathway; AMP from IMP: step 1/2. Plays an important role in the de novo pathway of purine nucleotide biosynthesis. Catalyzes the first committed step in the biosynthesis of AMP from IMP. In Helicobacter acinonychis (strain Sheeba), this protein is Adenylosuccinate synthetase.